A 461-amino-acid polypeptide reads, in one-letter code: METLYNGTLTLGGKDQESTGFAWWAGNARLINLSGRLLGAHVAHAGLIVFWAGAMNLFEVAHFVPEKPMYEQGLILLPHLATLGYGVGPGGEIIDTFPYFVSGVLHLISSAVLGFGGVYHSLIGPETLEETFPFFGYVWKDKNKMTNILGAHLIILGIGAWLLVWKALYFGGVYDTWAPGGGDVRIITNPTTNPSVIFGYLLKSPFGGDGWIVSVDNMEDIIGGHIYIGTINILGGLWHVFTQPWAWTRRAFVWSGEAYLSYSLAAISVMGFVACCMSWFNNTAYPSEFYGPTGPEASQSQAFTFLVRDQRLGANVASAQGPTGLGKYLMRSPTGEIIFGGETMRFWDFRGPWLEPLRGPNGLDLNKLKNDIQPWQERRAAEYMTHAPLGSLNSVGGVATEINATNFVSPRSWLATSHFCLGFFFFVAHLWHAGRARAAAAGFEKGIDRFNEPTLSLRPLD.

Positions 1-2 (ME) are excised as a propeptide. T3 bears the N-acetylthreonine mark. Residue T3 is modified to Phosphothreonine. The next 5 helical transmembrane spans lie at 57–81 (LFEVAHFVPEKPMYEQGLILLPHLA), 122–143 (LIGPETLEETFPFFGYVWKDKN), 166–188 (KALYFGGVYDTWAPGGGDVRIIT), 243–263 (QPWAWTRRAFVWSGEAYLSYS), and 279–300 (WFNNTAYPSEFYGPTGPEASQS). E355 is a binding site for [CaMn4O5] cluster. The helical transmembrane segment at 435–459 (RARAAAAGFEKGIDRFNEPTLSLRP) threads the bilayer.

It belongs to the PsbB/PsbC family. PsbC subfamily. PSII is composed of 1 copy each of membrane proteins PsbA, PsbB, PsbC, PsbD, PsbE, PsbF, PsbH, PsbI, PsbJ, PsbK, PsbL, PsbM, PsbT, PsbX, PsbY, PsbZ, Psb30/Ycf12, at least 3 peripheral proteins of the oxygen-evolving complex and a large number of cofactors. It forms dimeric complexes. Binds multiple chlorophylls and provides some of the ligands for the Ca-4Mn-5O cluster of the oxygen-evolving complex. It may also provide a ligand for a Cl- that is required for oxygen evolution. PSII binds additional chlorophylls, carotenoids and specific lipids. serves as cofactor.

Its subcellular location is the plastid. The protein localises to the chloroplast thylakoid membrane. In terms of biological role, one of the components of the core complex of photosystem II (PSII). It binds chlorophyll and helps catalyze the primary light-induced photochemical processes of PSII. PSII is a light-driven water:plastoquinone oxidoreductase, using light energy to abstract electrons from H(2)O, generating O(2) and a proton gradient subsequently used for ATP formation. In Oedogonium cardiacum (Filamentous green alga), this protein is Photosystem II CP43 reaction center protein.